Reading from the N-terminus, the 87-residue chain is Protein anon-73B1 (87 aa).

A helical membrane pass occupies residues 25–47 (LLIRYGLYVGALFQFVCISAAVL). The disordered stretch occupies residues 51–87 (NPDGQSNPESGEVTEREGEPVRTRLHKIRKLEKKKRR). A compositionally biased stretch (basic and acidic residues) spans 63–72 (VTEREGEPVR). Positions 73-87 (TRLHKIRKLEKKKRR) are enriched in basic residues.

It belongs to the UPF0239 family.

It is found in the membrane. This Drosophila melanogaster (Fruit fly) protein is Protein anon-73B1 (anon-73B1).